Here is a 426-residue protein sequence, read N- to C-terminus: Selenate reductase subunit C (426 aa).

The next 10 helical transmembrane spans lie at 5–25 (LYFTVLSFIAIVGVISLYIRL), 40–60 (WGLWIVFYIYFIGLSAGSFLL), 78–98 (LALFTAFFSLMAGLLFVLIDL), 119–139 (WEIQFYLIYMLLIVAEIWFLM), 187–207 (ILGIAGIPTAVGVHGGTGSLF), 223–243 (IIFLVSALVSGAALMLFLYSF), 261–281 (LLTLFIGIDLLLMIAEFLIGL), 302–322 (FIFWIGQIGMVIILPILLITI), 330–350 (MGLAGLSVVLGIVCVRWILVI), and 385–405 (VGLIGIVILLFSITVQLVPVF).

This sequence belongs to the NrfD family. In terms of assembly, the complex is composed of three subunits: SrdA, SrdB and SrdC.

It is found in the cell membrane. It catalyses the reaction selenite + a quinone + H2O = selenate + a quinol. Component of the respiratory selenate reductase complex, which catalyzes the reduction of selenate to selenite. This subunit probably receives electrons directly from the membrane quinone pool and transfers the electrons to the iron-sulfur clusters of SrdB. May be the membrane anchor protein subunit of the complex. In Mesobacillus selenatarsenatis (strain DSM 18680 / JCM 14380 / FERM P-15431 / SF-1), this protein is Selenate reductase subunit C.